The chain runs to 1733 residues: MHLGAYRTRHGKVSPTTETKLFLRFIVLCVVWISVHAQGQGIDILQQLGLGGRDVRYTSSVTAVPSSSWSTPLPQGVHLTDFGVILTDNAYIESPLVNILPISLRQPLTVLIGLQSFKVNNAFLFSIRNNNRLQFGVQLLPKKLIVHVGGKQTVTFNYSAHDERWHSFAITVDHHVISMFVECGKRHFSGETTSDVQTFDPHSVFTLGSINNSSAHFEGTVCQLEIMPSTAASAEYCRHLKQQCLRADASQAQRNLPHTAGMPTRHPAHTPLPRGFPGTDSPQKRFTEQDSLPKGFDGTELPRETFADGKSIPNNRSNGSATVHESQEHQTPRAQLTSFHSGNISAVTLPNYRIQAKEITTKEETNLTLSVAHHLPSEARMNEEGRINPLFAGFDNITQHEEAAGLPLPKKASSGFAHTNQDTMKNLEKALTANLYTNELIEMERILNSTLYRVMYGPSVDNHLELRKEGEFYPDATNPIEGSYEPQAYDYYSYEDYNAVLDMEYLRGPKGDPGPPGPPGPMGIPGPSGKRGPRGIPGPHGNPGLPGLPGPKGPKGDPGLSPGQAASGEKGDPGLLGLVGPPGLQGAKGLKGHPGLPGLRGEHGLPGLAGNIGSPGYPGRQGLAGPEGNPGSKGVRGFIGSPGEVGQLGPEGERGTPGVRGKKGPKGRQGFPGDFGDRGPAGLDGSPGLVGGTGPPGFPGVTGSVGPAGPTGPPGAPGPMGLSGSRGPSGIKGDKGEQGVAGEPGEPGYPGDKGNIGSPGPPGIRGKSGPSGQPGDPGPQGPSGPPGPEGFPGDIGIPGQNGPEGPKGHLGNRGPPGPPGLKGTQGEEGPIGPFGELGSRGKPGRKGYMGEPGPEGLKGEVGDQGDIGKTGETGPVGLPGEVGITGSIGEKGERGSPGPLGPQGEKGVMGYPGPPGAPGPMGPLGLPGLVGARGAPGSPGPKGQRGPRGPDGLAGDQGGHGAKGEKGNQGKRGLPGLPGKAGSPGERGVQGKPGFQGLPGSSGDVGPAGEPGPRGLPGIAGLPGEMGVEGPPGTEGDSGLQGEPGAKGDGGPAGSAGATGEPGPRGEPGAPGEEGLQGKDGLKGAPGGSGLPGEDGDKGEMGLPGTAGPVGRPGQMGLPGPEGIVGTPGQRGRLGKKGDKGQVGPTGEAGSRGPPGSVGENGPKGARGTRGAVGPLGLMGPEGEPGIPGYRGHQGQPGPSGLPGPKGEKGYPGEDSTVLGPPGPPGEPGPMGEQGETGEHGEEGYKGHMGVPGLRGATGQQGPPGEPGDQGGQGPKGERGSEGPQGKRGVPGPSGKPGIPGVPGFPGPKGLQGYPGVDGMSGYPGKPGLPGKQGLLGVPGSPGRTGVAGSPGPQGGKGASGPPGSPGAPGPKGEQGLPGQPGVPGQRGHRGTPGDQGLRGAPGLKGQPGEHGDQGLAGFQGFPGPRGPEGDAGIVGIVGPKGPIGQRGNTGPLGREGIIGPTGGTGPRGEKGFRGETGPQGPRGQPGPPGPPGAPGPRRQMDINAAIRALIESNSAQQMESYQNTEGTLISHSSDIFKTLTYLSSLLSSIKNPLGTRENPARICKDLLSCQYKVSDGKYWIDPNLGCSSDAFEVFCNFSAGGQTCLSPVSVTKLEFGVSKVQMNFLHLLSSEATHTITIHCLNTPRWSSTWADGPELPISFKGWNGQIFEENTLLEPQVLSDDCKIQDGSWHKAKFLFHTQNPNQLPVTEVQNLPHLGTEQKRYIESNSVCFL.

Residues 1–35 (MHLGAYRTRHGKVSPTTETKLFLRFIVLCVVWISV) form the signal peptide. Positions 102-229 (ISLRQPLTVL…TVCQLEIMPS (128 aa)) constitute a Laminin G-like domain. A glycan (N-linked (GlcNAc...) asparagine) is linked at Asn157. The disordered stretch occupies residues 257 to 335 (PHTAGMPTRH…SQEHQTPRAQ (79 aa)). Polar residues predominate over residues 312–324 (IPNNRSNGSATVH). Residues Asn366, Asn396, and Asn448 are each glycosylated (N-linked (GlcNAc...) asparagine). The interval 505–1499 (YLRGPKGDPG…GPPGAPGPRR (995 aa)) is disordered. Collagen-like domains are found at residues 506–561 (LRGP…PGLS), 577–636 (GLVG…KGVR), 679–738 (GPAG…KGEQ), 742–801 (GEPG…PGQN), 802–861 (GPEG…KGEV), 886–945 (GSIG…KGQR), 946–1005 (GPRG…SGDV), 1006–1065 (GPAG…PGPR), 1072–1131 (GEEG…PGQR), 1135–1189 (GKKG…GIPG), 1191–1215 (RGHQGQPGPSGLPGPKGEKGYPGED), 1220–1279 (GPPG…KGER), 1316–1375 (GVDG…KGEQ), 1376–1435 (GLPG…AGIV), and 1439–1498 (GPKG…PGPR). Residues 512–524 (DPGPPGPPGPMGI) show a composition bias toward pro residues. 2 stretches are compositionally biased toward low complexity: residues 573–599 (PGLLGLVGPPGLQGAKGLKGHPGLPGL) and 699–708 (PGVTGSVGPA). Positions 776–789 (DPGPQGPSGPPGPE) are enriched in pro residues. The segment covering 912–921 (PGPPGAPGPM) has biased composition (pro residues). Over residues 923–944 (PLGLPGLVGARGAPGSPGPKGQ) the composition is skewed to low complexity. A compositionally biased stretch (gly residues) spans 1045-1054 (GAKGDGGPAG). Over residues 1056 to 1074 (AGATGEPGPRGEPGAPGEE) the composition is skewed to low complexity. Over residues 1084–1093 (GAPGGSGLPG) the composition is skewed to gly residues. The segment covering 1175–1205 (PLGLMGPEGEPGIPGYRGHQGQPGPSGLPGP) has biased composition (low complexity). Residues 1237–1246 (TGEHGEEGYK) are compositionally biased toward basic and acidic residues. The span at 1323 to 1339 (YPGKPGLPGKQGLLGVP) shows a compositional bias: low complexity. Positions 1352–1361 (GPQGGKGASG) are enriched in gly residues. Composition is skewed to low complexity over residues 1371 to 1386 (PKGEQGLPGQPGVPGQ) and 1434 to 1444 (IVGIVGPKGPI). The segment covering 1485–1495 (QPGPPGPPGAP) has biased composition (pro residues). One can recognise a Fibrillar collagen NC1 domain in the interval 1534–1733 (SDIFKTLTYL…YIESNSVCFL (200 aa)).

The protein belongs to the fibrillar collagen family. In terms of tissue distribution, expressed in skeleton. Found at ossification centers of the craniofacial, axial and appendicular skeleton. Also expressed in retina and to a lower extent in cornea, skin and tendon.

It localises to the secreted. The protein localises to the extracellular space. The protein resides in the extracellular matrix. Functionally, involved in osteoblast differentiation. The sequence is that of Collagen alpha-1(XXIV) chain (Col24a1) from Mus musculus (Mouse).